A 395-amino-acid polypeptide reads, in one-letter code: GDP-mannose 4,6 dehydratase (395 aa).

2 stretches are compositionally biased toward polar residues: residues 1-13 (MLNT…STSD) and 24-36 (ESSS…QNGT). Residues 1-44 (MLNTRLIAMSTSDGAPETKKQRPESSSNGSKDQNGTEAGAEGDS) form a disordered region. NADP(+) is bound by residues 53–58 (GITGQD), 109–110 (DM), 131–135 (LAAQS), and Tyr-146. Residue Thr-178 is part of the active site. Catalysis depends on nucleophile residues Glu-180 and Tyr-202. 3 residues coordinate NADP(+): Lys-206, His-232, and Arg-237.

This sequence belongs to the NAD(P)-dependent epimerase/dehydratase family. GDP-mannose 4,6-dehydratase subfamily. NADP(+) serves as cofactor.

The catalysed reaction is GDP-alpha-D-mannose = GDP-4-dehydro-alpha-D-rhamnose + H2O. The protein operates within nucleotide-sugar biosynthesis; GDP-L-fucose biosynthesis via de novo pathway; GDP-L-fucose from GDP-alpha-D-mannose: step 1/2. Its function is as follows. Catalyzes the conversion of GDP-D-mannose to GDP-4-dehydro-6-deoxy-D-mannose (also known as GDP-4-keto-6-deoxy-D-mannose or GDP-4-dehydro-alpha-D-rhamnose), an essential step in the synthesis of GDP-fucose from GDP-mannose. This is GDP-mannose 4,6 dehydratase (Gmd) from Drosophila melanogaster (Fruit fly).